The following is a 113-amino-acid chain: Ig heavy chain V region 36-60 (113 aa).

This Mus musculus (Mouse) protein is Ig heavy chain V region 36-60.